Consider the following 184-residue polypeptide: Protein GrpE (184 aa).

A compositionally biased stretch (acidic residues) spans 1 to 10; the sequence is MTDTPPENEE. A disordered region spans residues 1–22; the sequence is MTDTPPENEEQHESNVQNENEV.

It belongs to the GrpE family. As to quaternary structure, homodimer.

It is found in the cytoplasm. Participates actively in the response to hyperosmotic and heat shock by preventing the aggregation of stress-denatured proteins, in association with DnaK and GrpE. It is the nucleotide exchange factor for DnaK and may function as a thermosensor. Unfolded proteins bind initially to DnaJ; upon interaction with the DnaJ-bound protein, DnaK hydrolyzes its bound ATP, resulting in the formation of a stable complex. GrpE releases ADP from DnaK; ATP binding to DnaK triggers the release of the substrate protein, thus completing the reaction cycle. Several rounds of ATP-dependent interactions between DnaJ, DnaK and GrpE are required for fully efficient folding. In Chlamydia pneumoniae (Chlamydophila pneumoniae), this protein is Protein GrpE.